A 511-amino-acid polypeptide reads, in one-letter code: MTIILKPGSVPLETLEKIYREGLPVRIDPAFHAGIEKAAARIAEIAAGDAPVYGINTGFGKLASIRIAAGDVATLQRNLILSHCCGVGEPLSENIVRLIMALKLVSLGRGASGVRLEVITLIEAMLEKGVIPMIPEKGSVGASGDLAPLAHMTAAMIGEGEAFYRGERLSGAKALGKAGLKPVVLAAKEGLALINGTQTSTALALAGLFRAHRAVRTALITGALSTDAAMGSDAPFHEEIHQLRGHKGQIDAGRALRTLLEGSAIRRSHLEGDQRVQDPYCIRCQPQVDGACLDILRQAARTLEIEANAVTDNPLVLSDGRAVSGGNFHAEPVAFAADQIALAVCEIGAISQRRIALLVDPSLSFGLPAFLTRKPGLNSGLMIAEVTSAALMSENKQMAHPASVDSTPTSANQEDHVSMACHGARRLLQMTANLNAIIGIEALTGALGVELRKPLTTSAELAKVIAALRAKVVTLEEDRYMADDLKAAAELVADGTLSGVISAGILPDLEA.

Positions 142–144 (ASG) form a cross-link, 5-imidazolinone (Ala-Gly). Ser143 is subject to 2,3-didehydroalanine (Ser).

Belongs to the PAL/histidase family. Post-translationally, contains an active site 4-methylidene-imidazol-5-one (MIO), which is formed autocatalytically by cyclization and dehydration of residues Ala-Ser-Gly.

It localises to the cytoplasm. It carries out the reaction L-histidine = trans-urocanate + NH4(+). It participates in amino-acid degradation; L-histidine degradation into L-glutamate; N-formimidoyl-L-glutamate from L-histidine: step 1/3. The chain is Histidine ammonia-lyase from Brucella suis biovar 1 (strain 1330).